Here is a 157-residue protein sequence, read N- to C-terminus: SsrA-binding protein (157 aa).

The protein belongs to the SmpB family.

The protein localises to the cytoplasm. Functionally, required for rescue of stalled ribosomes mediated by trans-translation. Binds to transfer-messenger RNA (tmRNA), required for stable association of tmRNA with ribosomes. tmRNA and SmpB together mimic tRNA shape, replacing the anticodon stem-loop with SmpB. tmRNA is encoded by the ssrA gene; the 2 termini fold to resemble tRNA(Ala) and it encodes a 'tag peptide', a short internal open reading frame. During trans-translation Ala-aminoacylated tmRNA acts like a tRNA, entering the A-site of stalled ribosomes, displacing the stalled mRNA. The ribosome then switches to translate the ORF on the tmRNA; the nascent peptide is terminated with the 'tag peptide' encoded by the tmRNA and targeted for degradation. The ribosome is freed to recommence translation, which seems to be the essential function of trans-translation. The protein is SsrA-binding protein of Lacticaseibacillus paracasei (strain ATCC 334 / BCRC 17002 / CCUG 31169 / CIP 107868 / KCTC 3260 / NRRL B-441) (Lactobacillus paracasei).